Reading from the N-terminus, the 286-residue chain is ATP synthase gamma chain (286 aa).

Belongs to the ATPase gamma chain family. F-type ATPases have 2 components, CF(1) - the catalytic core - and CF(0) - the membrane proton channel. CF(1) has five subunits: alpha(3), beta(3), gamma(1), delta(1), epsilon(1). CF(0) has three main subunits: a, b and c.

It localises to the cell inner membrane. Its function is as follows. Produces ATP from ADP in the presence of a proton gradient across the membrane. The gamma chain is believed to be important in regulating ATPase activity and the flow of protons through the CF(0) complex. This is ATP synthase gamma chain from Pseudomonas putida (strain ATCC 700007 / DSM 6899 / JCM 31910 / BCRC 17059 / LMG 24140 / F1).